Consider the following 212-residue polypeptide: Large ribosomal subunit protein uL3 (212 aa).

The span at 139–153 (LSHRVTGSIGQNQTP) shows a compositional bias: polar residues. Positions 139 to 161 (LSHRVTGSIGQNQTPGKVFKGKK) are disordered. The residue at position 151 (glutamine 151) is an N5-methylglutamine.

It belongs to the universal ribosomal protein uL3 family. As to quaternary structure, part of the 50S ribosomal subunit. Forms a cluster with proteins L14 and L19. Methylated by PrmB.

One of the primary rRNA binding proteins, it binds directly near the 3'-end of the 23S rRNA, where it nucleates assembly of the 50S subunit. The protein is Large ribosomal subunit protein uL3 of Baumannia cicadellinicola subsp. Homalodisca coagulata.